A 256-amino-acid polypeptide reads, in one-letter code: Isoprenyl transferase 1 (256 aa).

Asp34 is a catalytic residue. Asp34 provides a ligand contact to Mg(2+). Substrate contacts are provided by residues 35 to 38, Trp39, His52, and 80 to 82; these read GNRR and STE. The active-site Proton acceptor is the Asn83. Substrate-binding positions include Arg86, Arg205, and 211–213; that span reads RLS. Residue Glu224 participates in Mg(2+) binding.

Belongs to the UPP synthase family. In terms of assembly, homodimer. It depends on Mg(2+) as a cofactor.

Catalyzes the condensation of isopentenyl diphosphate (IPP) with allylic pyrophosphates generating different type of terpenoids. This is Isoprenyl transferase 1 from Corynebacterium efficiens (strain DSM 44549 / YS-314 / AJ 12310 / JCM 11189 / NBRC 100395).